Reading from the N-terminus, the 231-residue chain is Large ribosomal subunit protein uL1 (231 aa).

This sequence belongs to the universal ribosomal protein uL1 family. Part of the 50S ribosomal subunit.

Its function is as follows. Binds directly to 23S rRNA. The L1 stalk is quite mobile in the ribosome, and is involved in E site tRNA release. Functionally, protein L1 is also a translational repressor protein, it controls the translation of the L11 operon by binding to its mRNA. The sequence is that of Large ribosomal subunit protein uL1 from Acidovorax ebreus (strain TPSY) (Diaphorobacter sp. (strain TPSY)).